The sequence spans 281 residues: 33 kDa chaperonin (281 aa).

Intrachain disulfides connect Cys-229–Cys-231 and Cys-262–Cys-265.

It belongs to the HSP33 family. Post-translationally, under oxidizing conditions two disulfide bonds are formed involving the reactive cysteines. Under reducing conditions zinc is bound to the reactive cysteines and the protein is inactive.

It is found in the cytoplasm. In terms of biological role, redox regulated molecular chaperone. Protects both thermally unfolding and oxidatively damaged proteins from irreversible aggregation. Plays an important role in the bacterial defense system toward oxidative stress. The polypeptide is 33 kDa chaperonin (Pseudoalteromonas translucida (strain TAC 125)).